The sequence spans 223 residues: Phosphoribosylformylglycinamidine synthase subunit PurQ (223 aa).

One can recognise a Glutamine amidotransferase type-1 domain in the interval 4–223; it reads KIGVITFPGT…FLSAVGTIAA (220 aa). The active-site Nucleophile is the cysteine 87. Residues histidine 195 and glutamate 197 contribute to the active site.

As to quaternary structure, part of the FGAM synthase complex composed of 1 PurL, 1 PurQ and 2 PurS subunits.

The protein resides in the cytoplasm. It carries out the reaction N(2)-formyl-N(1)-(5-phospho-beta-D-ribosyl)glycinamide + L-glutamine + ATP + H2O = 2-formamido-N(1)-(5-O-phospho-beta-D-ribosyl)acetamidine + L-glutamate + ADP + phosphate + H(+). The catalysed reaction is L-glutamine + H2O = L-glutamate + NH4(+). The protein operates within purine metabolism; IMP biosynthesis via de novo pathway; 5-amino-1-(5-phospho-D-ribosyl)imidazole from N(2)-formyl-N(1)-(5-phospho-D-ribosyl)glycinamide: step 1/2. Part of the phosphoribosylformylglycinamidine synthase complex involved in the purines biosynthetic pathway. Catalyzes the ATP-dependent conversion of formylglycinamide ribonucleotide (FGAR) and glutamine to yield formylglycinamidine ribonucleotide (FGAM) and glutamate. The FGAM synthase complex is composed of three subunits. PurQ produces an ammonia molecule by converting glutamine to glutamate. PurL transfers the ammonia molecule to FGAR to form FGAM in an ATP-dependent manner. PurS interacts with PurQ and PurL and is thought to assist in the transfer of the ammonia molecule from PurQ to PurL. In Corynebacterium glutamicum (strain ATCC 13032 / DSM 20300 / JCM 1318 / BCRC 11384 / CCUG 27702 / LMG 3730 / NBRC 12168 / NCIMB 10025 / NRRL B-2784 / 534), this protein is Phosphoribosylformylglycinamidine synthase subunit PurQ.